A 141-amino-acid polypeptide reads, in one-letter code: Lutropin subunit beta (141 aa).

A signal peptide spans 1–20; sequence MEMLQGLLLWLLLSVGGVWA. Intrachain disulfides connect Cys29-Cys77, Cys43-Cys92, Cys46-Cys130, Cys54-Cys108, Cys58-Cys110, and Cys113-Cys120. The N-linked (GlcNAc...) asparagine glycan is linked to Asn33.

This sequence belongs to the glycoprotein hormones subunit beta family. In terms of assembly, heterodimer of a common alpha chain and a unique beta chain which confers biological specificity to thyrotropin, lutropin, follitropin and gonadotropin.

The protein resides in the secreted. Its function is as follows. Promotes spermatogenesis and ovulation by stimulating the testes and ovaries to synthesize steroids. This chain is Lutropin subunit beta (LHB1), found in Ceratotherium simum (White rhinoceros).